The chain runs to 192 residues: Leucine-rich repeat-containing protein 51 (192 aa).

LRR repeat units lie at residues 50–71 (MTQS…NHAV), 80–101 (NLAW…LTTF), and 103–124 (NLSV…NKLA). Residues 137-175 (NPIEEEKGYRQYVLCTLPHITTFDFSGVTKADRTTAEVW) form the LRRCT domain.

It localises to the cytoplasm. The chain is Leucine-rich repeat-containing protein 51 from Bos taurus (Bovine).